A 1269-amino-acid polypeptide reads, in one-letter code: DNA-directed RNA polymerase subunit beta (1269 aa).

The protein belongs to the RNA polymerase beta chain family. In terms of assembly, the RNAP catalytic core consists of 2 alpha, 1 beta, 1 beta' and 1 omega subunit. When a sigma factor is associated with the core the holoenzyme is formed, which can initiate transcription.

It catalyses the reaction RNA(n) + a ribonucleoside 5'-triphosphate = RNA(n+1) + diphosphate. Its function is as follows. DNA-dependent RNA polymerase catalyzes the transcription of DNA into RNA using the four ribonucleoside triphosphates as substrates. The protein is DNA-directed RNA polymerase subunit beta of Porphyromonas gingivalis (strain ATCC BAA-308 / W83).